A 426-amino-acid polypeptide reads, in one-letter code: Elongation factor 1-alpha (426 aa).

Positions 5-221 constitute a tr-type G domain; the sequence is KPHMNLAVIG…DTFKEPDKPT (217 aa). Residues 14-21 are G1; it reads GHIDHGKS. 14-21 contributes to the GTP binding site; sequence GHIDHGKS. S21 contacts Mg(2+). Residues 70 to 74 form a G2 region; the sequence is GITID. A G3 region spans residues 91–94; sequence DCPG. Residues 91–95 and 146–149 contribute to the GTP site; these read DCPGH and NKMD. The G4 stretch occupies residues 146 to 149; the sequence is NKMD. The G5 stretch occupies residues 185–187; the sequence is SSF.

It belongs to the TRAFAC class translation factor GTPase superfamily. Classic translation factor GTPase family. EF-Tu/EF-1A subfamily.

It is found in the cytoplasm. The catalysed reaction is GTP + H2O = GDP + phosphate + H(+). Functionally, GTP hydrolase that promotes the GTP-dependent binding of aminoacyl-tRNA to the A-site of ribosomes during protein biosynthesis. The sequence is that of Elongation factor 1-alpha from Methanosphaerula palustris (strain ATCC BAA-1556 / DSM 19958 / E1-9c).